A 277-amino-acid polypeptide reads, in one-letter code: Inositol monophosphatase 1 (277 aa).

4 residues coordinate Mg(2+): glutamate 70, aspartate 90, isoleucine 92, and aspartate 93. Glutamate 70 lines the substrate pocket. Substrate-binding positions include 92–95, 194–196, glutamate 213, and aspartate 220; these read IDGT and GTA. Residue aspartate 220 coordinates Mg(2+).

Belongs to the inositol monophosphatase superfamily. In terms of assembly, homodimer. The cofactor is Mg(2+). In terms of tissue distribution, ubiquitous.

The protein resides in the cytoplasm. The catalysed reaction is a myo-inositol phosphate + H2O = myo-inositol + phosphate. It catalyses the reaction 1D-myo-inositol 1-phosphate + H2O = myo-inositol + phosphate. It carries out the reaction 1D-myo-inositol 2-phosphate + H2O = myo-inositol + phosphate. The enzyme catalyses 1D-myo-inositol 3-phosphate + H2O = myo-inositol + phosphate. The catalysed reaction is 1D-myo-inositol 4-phosphate + H2O = myo-inositol + phosphate. It catalyses the reaction 1D-myo-inositol 5-phosphate + H2O = myo-inositol + phosphate. It carries out the reaction 1D-myo-inositol 6-phosphate + H2O = myo-inositol + phosphate. The enzyme catalyses scyllo-inositol 1-phosphate + H2O = scyllo-inositol + phosphate. The catalysed reaction is alpha-D-galactose 1-phosphate + H2O = D-galactose + phosphate. It catalyses the reaction alpha-D-glucose 1-phosphate + H2O = D-glucose + phosphate. It carries out the reaction D-glucose 6-phosphate + H2O = D-glucose + phosphate. The enzyme catalyses beta-D-fructose 1-phosphate + H2O = D-fructose + phosphate. The catalysed reaction is glycerol 2-phosphate + H2O = glycerol + phosphate. It catalyses the reaction adenosine 2'-phosphate + H2O = adenosine + phosphate. The protein operates within polyol metabolism; myo-inositol biosynthesis; myo-inositol from D-glucose 6-phosphate: step 2/2. With respect to regulation, activity with myo-inositol monophosphate and D-galactose 1-phosphate is inhibited by Li(+), Ca(2+) and Mn(2+), but also by Mg(2+) at concentrations above 3 mM. Functionally, phosphatase involved in the dephosphorylation of myo-inositol monophosphate to generate myo-inositol. Is also able to dephosphorylate scyllo-inositol-phosphate, myo-inositol 1,4-diphosphate, scyllo-inositol-1,3-diphosphate and scyllo-inositol-1,4-diphosphate. Also dephosphorylates in vitro other sugar-phosphates including D-galactose-1-phosphate, glucose-1-phosphate, glucose-6-phosphate, fructose-1-phosphate, beta-glycerophosphate and 2'-AMP. Responsible for the provision of inositol required for synthesis of phosphatidylinositol and polyphosphoinositides, and involved in maintaining normal brain function. Has been implicated as the pharmacological target for lithium Li(+) action in brain. Is equally active with myo-inositol monophosphate and D-galactose 1-phosphate. The polypeptide is Inositol monophosphatase 1 (Impa1) (Rattus norvegicus (Rat)).